We begin with the raw amino-acid sequence, 492 residues long: Transmembrane protein 104 homolog (492 aa).

The Cytoplasmic portion of the chain corresponds to 1–18 (MQSNTDSSGTSGTYSQTV). Residues 19–39 (GLLYVFNLIVGTGALALPKAF) form a helical membrane-spanning segment. The Extracellular segment spans residues 40–45 (QSAGWL). A helical transmembrane segment spans residues 46-66 (LSISLLTFSAFMSYVAATFVI). Topologically, residues 67-114 (EALSVANAVLSKKRRVEYDDVVVADGPSTFEIAKKVEVSEMASMFLSK) are cytoplasmic. The chain crosses the membrane as a helical span at residues 115–135 (VSLVFSYFAIIIYLFGDLAIY). The Extracellular portion of the chain corresponds to 136–177 (STTVPKSAMNIVCSTINATIVKSSDPCHESWPEILTRMTVYR). N152 is a glycosylation site (N-linked (GlcNAc...) asparagine). Residues 178–198 (FFVIVFVVVVCLPMVIAGITK) form a helical membrane-spanning segment. Topologically, residues 199-210 (TRHIQIMTTLSR) are cytoplasmic. Residues 211-231 (WAAFILMISLATMQLSSQGAA) traverse the membrane as a helical segment. Residues 232–238 (AHPPAYN) lie on the Extracellular side of the membrane. The chain crosses the membrane as a helical span at residues 239–259 (FHGFGSLFGCAVYAFMCHHSI). The Cytoplasmic portion of the chain corresponds to 260–275 (PSLITPMRTKENVFGK). Residues 276-296 (IAVVYGIVGVFYFTLSLTGAF) traverse the membrane as a helical segment. At 297 to 325 (AFEHVQDIYTLNFLHDDNTSLVYSIIDYF) the chain is on the extracellular side. The N-linked (GlcNAc...) asparagine glycan is linked to N314. A helical transmembrane segment spans residues 326-346 (LALFPIITLTSSYPIIALTLI). The Cytoplasmic segment spans residues 347–391 (NNFKVVKDILCPKTGQENESLLEADNQVEDNDTDDEREARNGNPK). Residues 367–382 (LLEADNQVEDNDTDDE) show a composition bias toward acidic residues. The interval 367–387 (LLEADNQVEDNDTDDEREARN) is disordered. The helical transmembrane segment at 392–412 (TIFDVLVPTLVLALPTFLSLL) threads the bilayer. Residues 413-415 (TDD) are Extracellular-facing. A helical transmembrane segment spans residues 416–436 (MLLLASITGSFPGVAVQFAIP). Topologically, residues 437–466 (CLLVTAARKHARSVLNFPVPRKNNSPFQSR) are cytoplasmic. A helical transmembrane segment spans residues 467 to 487 (FWIMLISSWAGFSMIMVLLNL). The Extracellular portion of the chain corresponds to 488-492 (VGVKF).

Belongs to the TMEM104 family.

The protein localises to the membrane. This Caenorhabditis briggsae protein is Transmembrane protein 104 homolog.